We begin with the raw amino-acid sequence, 703 residues long: Harmonin-binding protein USHBP1 (703 aa).

Residues 1-15 (MSARATRPRSRRGRH) are compositionally biased toward basic residues. Disordered stretches follow at residues 1-113 (MSAR…PPGN) and 138-172 (HQPP…CQRE). Positions 189 to 227 (SREDELVRTQASLEAIRAEKETLQKEVQELQDSLLRLEP) form a coiled coil. The disordered stretch occupies residues 228-256 (CPHLSHNQAGGSGSGSSSSEADREPWETQ). Residues 289-309 (EMHIMEAQMEQLRGSIEKLKC) adopt a coiled-coil conformation. The tract at residues 396–416 (MDAGAQQNPQPSPEGSSVDKP) is disordered. Polar residues predominate over residues 400–410 (AQQNPQPSPEG). Positions 476-513 (RLEKTQIQQDLVAAREALADLMLRLQLVRREKRGLELR) form a coiled coil. Residues 540–583 (AGGANSSGGHSSGGGSSGDEEEWYQGLPAVPGGTSGIDGGQVGR) form a disordered region. Over residues 572–581 (GTSGIDGGQV) the composition is skewed to gly residues. The stretch at 596–681 (ASLTRTLDLQ…QAEEVAVLEA (86 aa)) forms a coiled coil.

It belongs to the MCC family. In terms of assembly, interacts via its C-terminus with the first PDZ domain of USH1C. Highest level of expression in heart, and moderate to low expression in skeletal muscle, kidney, liver, small intestine, placenta and lung.

The sequence is that of Harmonin-binding protein USHBP1 from Homo sapiens (Human).